The sequence spans 86 residues: Superoxide dismutase [Cu-Zn] (86 aa).

The disordered stretch occupies residues 1–26; sequence AKEKGGKLTAGLAAGGHWNPNKAPHH. The segment covering 7-16 has biased composition (low complexity); that stretch reads KLTAGLAAGG. Histidine 17 provides a ligand contact to Cu cation. The Zn(2+) site is built by histidine 17, histidine 26, histidine 35, and aspartate 38. Histidine 73 is a binding site for Cu cation.

The protein belongs to the Cu-Zn superoxide dismutase family. As to quaternary structure, homodimer. The cofactor is Cu cation. It depends on Zn(2+) as a cofactor.

The protein resides in the periplasm. The catalysed reaction is 2 superoxide + 2 H(+) = H2O2 + O2. Its function is as follows. Destroys radicals which are normally produced within the cells and which are toxic to biological systems. In Mannheimia haemolytica (Pasteurella haemolytica), this protein is Superoxide dismutase [Cu-Zn] (sodC).